We begin with the raw amino-acid sequence, 98 residues long: (4S)-4-hydroxy-5-phosphonooxypentane-2,3-dione isomerase (98 aa).

The 90-residue stretch at 2–91 folds into the ABM domain; it reads NVTLVEINIK…MSQPRQKRSF (90 aa).

This sequence belongs to the LsrG family. As to quaternary structure, homodimer.

The protein resides in the cytoplasm. It carries out the reaction (2S)-2-hydroxy-3,4-dioxopentyl phosphate = 3-hydroxy-2,4-dioxopentyl phosphate. Its function is as follows. Involved in the degradation of phospho-AI-2, thereby terminating induction of the lsr operon and closing the AI-2 signaling cycle. Catalyzes the conversion of (4S)-4-hydroxy-5-phosphonooxypentane-2,3-dione (P-DPD) to 3-hydroxy-5-phosphonooxypentane-2,4-dione (P-HPD). The polypeptide is (4S)-4-hydroxy-5-phosphonooxypentane-2,3-dione isomerase (Klebsiella pneumoniae subsp. pneumoniae (strain ATCC 700721 / MGH 78578)).